Here is a 906-residue protein sequence, read N- to C-terminus: Cadherin-2 (906 aa).

Residues 1–25 (MCRIVGAPRTLLPLLAALLQASVDA) form the signal peptide. A propeptide spanning residues 26–159 (SGEISLCKTG…HNGYLQRQKR (134 aa)) is cleaved from the precursor. Phosphoserine occurs at positions 96 and 135. 5 Cadherin domains span residues 160–267 (DWVI…RPEF), 268–392 (LHQV…GEVP), 393–497 (ENRV…NPYF), 498–603 (APNP…DNAP), and 604–714 (QVLP…DVDR). The Extracellular segment spans residues 160–724 (DWVIPPINLP…IVGAGLGTGA (565 aa)). Residue Glu-170 coordinates Ca(2+). Asn-190 carries N-linked (GlcNAc...) asparagine glycosylation. The Ca(2+) site is built by Asp-226, Glu-228, Asp-259, Met-260, Asn-261, Asp-262, and Asn-263. Asn-273 carries an N-linked (GlcNAc...) asparagine glycan. Asp-293, Asp-295, and Asn-301 together coordinate Ca(2+). N-linked (GlcNAc...) asparagine glycosylation occurs at Asn-325. Residue Asp-353 participates in Ca(2+) binding. 6 N-linked (GlcNAc...) asparagine glycosylation sites follow: Asn-357, Asn-402, Asn-572, Asn-622, Asn-651, and Asn-692. A helical membrane pass occupies residues 725–746 (IIAILLCIIILLILVLMFVVWM). The Cytoplasmic portion of the chain corresponds to 747-906 (KRRDKERQAK…LADMYGGGDD (160 aa)). The span at 863 to 880 (SGSTAGSLSSLNSSSSGG) shows a compositional bias: low complexity. The disordered stretch occupies residues 863–884 (SGSTAGSLSSLNSSSSGGEQDY).

As to quaternary structure, homodimer (via extracellular region). Can also form heterodimers with other cadherins (via extracellular region). Dimerization occurs in trans, i.e. with a cadherin chain from another cell. Interacts with CDCP1. Interacts with PCDH8; this complex may also include TAOK2. The interaction with PCDH8 may lead to internalization through TAOK2/p38 MAPK pathway. Identified in a complex containing FGFR4, NCAM1, CDH2, PLCG1, FRS2, SRC, SHC1, GAP43 and CTTN. May interact with OBSCN (via protein kinase domain 2). Interacts with FBXO45. In terms of processing, cleaved by MMP24. Ectodomain cleavage leads to the generation of a soluble 90 kDa N-terminal soluble fragment and a 45 kDa membrane-bound C-terminal fragment 1 (CTF1), which is further cleaved by gamma-secretase into a 35 kDa. Cleavage in neural stem cells by MMP24 affects CDH2-mediated anchorage of neural stem cells to ependymocytes in the adult subependymal zone, leading to modulate neural stem cell quiescence. May be phosphorylated by OBSCN. Detected in liver, kidney, heart and brain capillaries.

The protein resides in the cell membrane. Its subcellular location is the sarcolemma. It localises to the cell junction. The protein localises to the cell surface. It is found in the desmosome. The protein resides in the adherens junction. Functionally, calcium-dependent cell adhesion protein; preferentially mediates homotypic cell-cell adhesion by dimerization with a CDH2 chain from another cell. Cadherins may thus contribute to the sorting of heterogeneous cell types. Acts as a regulator of neural stem cells quiescence by mediating anchorage of neural stem cells to ependymocytes in the adult subependymal zone: upon cleavage by MMP24, CDH2-mediated anchorage is affected, leading to modulate neural stem cell quiescence. Plays a role in cell-to-cell junction formation between pancreatic beta cells and neural crest stem (NCS) cells, promoting the formation of processes by NCS cells. Required for proper neurite branching. Required for pre- and postsynaptic organization. CDH2 may be involved in neuronal recognition mechanism. In hippocampal neurons, may regulate dendritic spine density. The polypeptide is Cadherin-2 (CDH2) (Bos taurus (Bovine)).